We begin with the raw amino-acid sequence, 258 residues long: PHD finger protein ALFIN-LIKE 5 (258 aa).

A disordered region spans residues 143–205 (AKKQTKEKAP…EEEERDNTLC (63 aa)). Residues 152 to 165 (PNSTNKPNKPSSKM) show a composition bias toward polar residues. The span at 184 to 200 (DDDESGDEYADEEEEER) shows a compositional bias: acidic residues. The PHD-type zinc finger occupies 202 to 254 (NTLCGSCGTNDGKDEFWICCDSCERWYHGKCVKITPARAEHIKHYKCPDCGNK).

Belongs to the Alfin family.

It is found in the nucleus. Functionally, histone-binding component that specifically recognizes H3 tails trimethylated on 'Lys-4' (H3K4me3), which mark transcription start sites of virtually all active genes. The polypeptide is PHD finger protein ALFIN-LIKE 5 (Oryza sativa subsp. indica (Rice)).